A 196-amino-acid chain; its full sequence is MSRYRGPRLKKIRRLGALPGLTRKTPKSGSNPKKKFHSGKKEQYRIRLQEKQKLRFHYGLTERQLLRYVYIAGKAKRSTGQVLLQLLEMRLDNILFRLGMASTIPGARQLVNHRHILVNGRIVNIPSFRCKPRDIITTKDNQRSKGLVQNSIASSDPGKLPKHLTIDTLEYKGLVNKILDRKWVGLKINELLVVEY.

Positions 1–14 (MSRYRGPRLKKIRR) are enriched in basic residues. The disordered stretch occupies residues 1–43 (MSRYRGPRLKKIRRLGALPGLTRKTPKSGSNPKKKFHSGKKEQ). In terms of domain architecture, S4 RNA-binding spans 89–169 (MRLDNILFRL…LPKHLTIDTL (81 aa)).

Belongs to the universal ribosomal protein uS4 family. Part of the 30S ribosomal subunit. Contacts protein S5. The interaction surface between S4 and S5 is involved in control of translational fidelity.

It is found in the plastid. It localises to the chloroplast. Functionally, one of the primary rRNA binding proteins, it binds directly to 16S rRNA where it nucleates assembly of the body of the 30S subunit. With S5 and S12 plays an important role in translational accuracy. The polypeptide is Small ribosomal subunit protein uS4c (rps4) (Melica uniflora (Wood melick grass)).